The chain runs to 375 residues: Histidine biosynthesis bifunctional protein HisB (375 aa).

A histidinol-phosphatase region spans residues 1-168; sequence MTPILFVDRD…GIAHELADAP (168 aa). The active-site Nucleophile is the Asp8. Mg(2+) is bound by residues Asp8, Asp10, and Asp128. Asp10 (proton donor) is an active-site residue. The segment at 169 to 375 is imidazoleglycerol-phosphate dehydratase; it reads RRALVQRNTK…TALPTTKGTL (207 aa).

The protein in the N-terminal section; belongs to the histidinol-phosphatase family. In the C-terminal section; belongs to the imidazoleglycerol-phosphate dehydratase family. Mg(2+) serves as cofactor.

It localises to the cytoplasm. It carries out the reaction D-erythro-1-(imidazol-4-yl)glycerol 3-phosphate = 3-(imidazol-4-yl)-2-oxopropyl phosphate + H2O. It catalyses the reaction L-histidinol phosphate + H2O = L-histidinol + phosphate. The protein operates within amino-acid biosynthesis; L-histidine biosynthesis; L-histidine from 5-phospho-alpha-D-ribose 1-diphosphate: step 6/9. Its pathway is amino-acid biosynthesis; L-histidine biosynthesis; L-histidine from 5-phospho-alpha-D-ribose 1-diphosphate: step 8/9. This is Histidine biosynthesis bifunctional protein HisB from Xanthomonas axonopodis pv. citri (strain 306).